The chain runs to 293 residues: 4-hydroxy-tetrahydrodipicolinate synthase (293 aa).

Position 45 (Ser-45) interacts with pyruvate. Catalysis depends on Tyr-133, which acts as the Proton donor/acceptor. Lys-161 acts as the Schiff-base intermediate with substrate in catalysis. Residue Ile-203 coordinates pyruvate.

Belongs to the DapA family. As to quaternary structure, homotetramer; dimer of dimers.

The protein localises to the cytoplasm. It catalyses the reaction L-aspartate 4-semialdehyde + pyruvate = (2S,4S)-4-hydroxy-2,3,4,5-tetrahydrodipicolinate + H2O + H(+). It participates in amino-acid biosynthesis; L-lysine biosynthesis via DAP pathway; (S)-tetrahydrodipicolinate from L-aspartate: step 3/4. Its function is as follows. Catalyzes the condensation of (S)-aspartate-beta-semialdehyde [(S)-ASA] and pyruvate to 4-hydroxy-tetrahydrodipicolinate (HTPA). This is 4-hydroxy-tetrahydrodipicolinate synthase from Psychromonas ingrahamii (strain DSM 17664 / CCUG 51855 / 37).